The primary structure comprises 157 residues: NudC domain-containing protein 2 (157 aa).

At Ser-2 the chain carries N-acetylserine. A CS domain is found at 14–104; it reads CGTPWGQWYQ…DAANCWTSLL (91 aa). The disordered stretch occupies residues 134 to 157; it reads FDFSGAEISGNYTKGGPDFSNLEK. The residue at position 142 (Ser-142) is a Phosphoserine. The residue at position 145 (Tyr-145) is a Phosphotyrosine.

Interacts with LIS1.

It localises to the chromosome. Its subcellular location is the centromere. The protein localises to the kinetochore. The protein resides in the cytoplasm. It is found in the cytoskeleton. It localises to the microtubule organizing center. Its subcellular location is the centrosome. The protein localises to the spindle pole. In terms of biological role, may regulate the LIS1/dynein pathway by stabilizing LIS1 with Hsp90 chaperone. The chain is NudC domain-containing protein 2 (Nudcd2) from Mus musculus (Mouse).